A 542-amino-acid polypeptide reads, in one-letter code: Cytochrome P450 734A6 (542 aa).

Residues 2–22 (GWWGWAAAAAAAAAWVAVKVL) traverse the membrane as a helical segment. Cys-474 contacts heme.

This sequence belongs to the cytochrome P450 family. The cofactor is heme. Highly expressed in leaf sheaths. Expressed in roots, shoot apex, leaf blades, internodes and panicles.

It localises to the membrane. Functionally, cytochrome P450 involved in brassinosteroids (BRs) inactivation and regulation of BRs homeostasis. Is a multifunctional and multisubstrate enzyme that controls the endogenous bioactive BR content both by direct inactivation of castasterone (CS) and by decreasing the levels of BR precursors. Catalyzes the oxidation of carbon 22 hydroxylated BR intermediates to produce C26 oxidized metabolites. This is Cytochrome P450 734A6 (CYP734A6) from Oryza sativa subsp. japonica (Rice).